The primary structure comprises 695 residues: MKDLARYRNIGIFAHVDAGKTTTTERILKLTGQIHKTGEVHDGESTTDFMEQEAERGITIQSAAVSCFWKDHRFNVIDTPGHVDFTVEVYRSLKVLDGGIGVFCGSGGVEPQSETNWRYANDSEVARIIFVNKLDRMGADFYRVVDQTKKVLGANPLVMVLPIGIEDDFVGVVDLLTRKAFIWDDTGLPENYEITDVPADMVDKVEEYREMLIETAVEQDDDLMMAYMDGEEPSMEDIKRCIRKGTRTMDFFPTYCGSAFKNKGVQNILDAVVDYLPSPTEVDPQPLTDEEGEPNGKYAIVSPDETFKALAFKITDDRFGALTFVRIYSGTLKKGDTILNAATGKTERIGRMCEMQADDRNELTSAQAGDIIAIVGMKSNVQTGHTLCDPKDPIILEAMVFPEPVISISVTPKDKGSTEKMGLAIGKMVAEDPTFRVETDQDSGETILSGMGELHLDIKVDILKRTYGVELEVGEPQVAYRETITQEVEDSYTHKKQSGGSGQFGKIDYRIKPGEPNSGFTFSSVVVGGNVPKEFFPAIEKGFASMMESGVLAGFPVLDVEVELYDGGFHAVDSSAVAFEIAAKGAFRQSIPKAGPQLIEPIMKVDVFTPDDHVGDVIGDLNRRRGMIKDQEAGVTGVRVKADIPLSEMFGYIGSLRTMTSGRGQFSMEFSHYSPCPNNVAEKVIADTKERNAKK.

One can recognise a tr-type G domain in the interval A5–T280. Residues A14–T21, D78–H82, and N132–D135 each bind GTP.

The protein belongs to the TRAFAC class translation factor GTPase superfamily. Classic translation factor GTPase family. EF-G/EF-2 subfamily.

It is found in the cytoplasm. Its function is as follows. Catalyzes the GTP-dependent ribosomal translocation step during translation elongation. During this step, the ribosome changes from the pre-translocational (PRE) to the post-translocational (POST) state as the newly formed A-site-bound peptidyl-tRNA and P-site-bound deacylated tRNA move to the P and E sites, respectively. Catalyzes the coordinated movement of the two tRNA molecules, the mRNA and conformational changes in the ribosome. The protein is Elongation factor G 1 of Pseudoalteromonas atlantica (strain T6c / ATCC BAA-1087).